The primary structure comprises 249 residues: 3-deoxy-D-manno-octulosonic acid kinase (249 aa).

Asp-175 is an active-site residue.

This sequence belongs to the protein kinase superfamily. KdkA/RfaP family.

It is found in the cell inner membrane. The catalysed reaction is an alpha-Kdo-(2-&gt;6)-lipid IVA + ATP = a 4-O-phospho-alpha-Kdo-(2-&gt;6)-lipid IVA + ADP + H(+). Its pathway is bacterial outer membrane biogenesis; LPS core biosynthesis. In terms of biological role, catalyzes the ATP-dependent phosphorylation of the 3-deoxy-D-manno-octulosonic acid (Kdo) residue in Kdo-lipid IV(A) at the 4-OH position. The sequence is that of 3-deoxy-D-manno-octulosonic acid kinase from Xylella fastidiosa (strain M23).